A 143-amino-acid polypeptide reads, in one-letter code: Transcriptional regulator MraZ (143 aa).

2 consecutive SpoVT-AbrB domains span residues 5–47 (EYEH…TLEE) and 76–119 (AVEV…DRAS).

This sequence belongs to the MraZ family. In terms of assembly, forms oligomers.

It is found in the cytoplasm. The protein resides in the nucleoid. In Staphylococcus carnosus (strain TM300), this protein is Transcriptional regulator MraZ.